The following is a 941-amino-acid chain: Cilia- and flagella-associated protein 69 (941 aa).

It is found in the cell projection. The protein localises to the cilium. The protein resides in the flagellum. Functionally, cilium- and flagellum-associated protein. In the olfactory epithelium, regulates the speed of activation and termination of the odor response and thus contributes to the robustness of olfactory transduction pathways. Required for sperm flagellum assembly and stability. The sequence is that of Cilia- and flagella-associated protein 69 from Callithrix jacchus (White-tufted-ear marmoset).